The primary structure comprises 130 residues: Small ribosomal subunit protein uS11 (130 aa).

It belongs to the universal ribosomal protein uS11 family. As to quaternary structure, part of the 30S ribosomal subunit. Interacts with proteins S7 and S18. Binds to IF-3.

In terms of biological role, located on the platform of the 30S subunit, it bridges several disparate RNA helices of the 16S rRNA. Forms part of the Shine-Dalgarno cleft in the 70S ribosome. This Nitrobacter hamburgensis (strain DSM 10229 / NCIMB 13809 / X14) protein is Small ribosomal subunit protein uS11.